Reading from the N-terminus, the 378-residue chain is Glutamate 5-kinase 1 (378 aa).

Residue Lys-13 participates in ATP binding. Residues Ser-53, Asp-140, and Asn-152 each coordinate substrate. Residue Ser-172–Asp-173 coordinates ATP. The 78-residue stretch at Ala-278 to Glu-355 folds into the PUA domain.

The protein belongs to the glutamate 5-kinase family.

The protein resides in the cytoplasm. It carries out the reaction L-glutamate + ATP = L-glutamyl 5-phosphate + ADP. It functions in the pathway amino-acid biosynthesis; L-proline biosynthesis; L-glutamate 5-semialdehyde from L-glutamate: step 1/2. Catalyzes the transfer of a phosphate group to glutamate to form L-glutamate 5-phosphate. The sequence is that of Glutamate 5-kinase 1 from Mesorhizobium japonicum (strain LMG 29417 / CECT 9101 / MAFF 303099) (Mesorhizobium loti (strain MAFF 303099)).